Reading from the N-terminus, the 282-residue chain is Putative phosphite transport system permease protein HtxC (282 aa).

A run of 4 helical transmembrane segments spans residues 23–43 (HFAT…VCQI), 81–101 (LAMA…LALM), 130–150 (VYAL…VLAI), and 239–259 (FNKM…IDFI). The 184-residue stretch at 77–260 (AGETLAMATI…LMVSAIDFIS (184 aa)) folds into the ABC transmembrane type-1 domain.

Belongs to the binding-protein-dependent transport system permease family.

Its subcellular location is the cell inner membrane. Its function is as follows. Probably forms part of a binding-protein-dependent hypophosphite transporter. The sequence is that of Putative phosphite transport system permease protein HtxC (htxC) from Stutzerimonas stutzeri (Pseudomonas stutzeri).